The chain runs to 453 residues: Ribosomal protein uS12 methylthiotransferase RimO (453 aa).

An MTTase N-terminal domain is found at 5–120 (PKVGFVSLGC…VMQAVHSHLP (116 aa)). [4Fe-4S] cluster contacts are provided by C14, C50, C79, C151, C155, and C158. Positions 137–382 (LTPRHYAYLK…MEVAEEVSAN (246 aa)) constitute a Radical SAM core domain. The TRAM domain occupies 385–453 (QRKVGKTLKV…ADGHDLWGEV (69 aa)).

Belongs to the methylthiotransferase family. RimO subfamily. Requires [4Fe-4S] cluster as cofactor.

The protein localises to the cytoplasm. The catalysed reaction is L-aspartate(89)-[ribosomal protein uS12]-hydrogen + (sulfur carrier)-SH + AH2 + 2 S-adenosyl-L-methionine = 3-methylsulfanyl-L-aspartate(89)-[ribosomal protein uS12]-hydrogen + (sulfur carrier)-H + 5'-deoxyadenosine + L-methionine + A + S-adenosyl-L-homocysteine + 2 H(+). Functionally, catalyzes the methylthiolation of an aspartic acid residue of ribosomal protein uS12. The sequence is that of Ribosomal protein uS12 methylthiotransferase RimO from Burkholderia cenocepacia (strain HI2424).